Consider the following 234-residue polypeptide: Transcription factor bHLH160 (234 aa).

Residues 1–13 (MSSQPNHQTSISS) show a composition bias toward polar residues. Residues 1-67 (MSSQPNHQTS…GAAKKQDHNA (67 aa)) are disordered. Positions 27–37 (IVEKESAEKDT) are enriched in basic and acidic residues. Positions 60 to 115 (AKKQDHNAKERLRRMRLHASYLTLGTLLPDHSSSSSKKKWSAPSIIDNVITYIPKL) constitute a bHLH domain.

This sequence belongs to the bHLH protein family.

The protein resides in the nucleus. This chain is Transcription factor bHLH160, found in Arabidopsis thaliana (Mouse-ear cress).